A 115-amino-acid polypeptide reads, in one-letter code: MTGKGQGFGFGLGKMKELAEAFKKAQQVQEGAKRLQEELEQMEIQGEAGGGLVKVIVSGNQEPKRVEISPDALAQGADLLSDLVTAAMKDAYIKSTATMRERMEDLTSGLELPGF.

This sequence belongs to the YbaB/EbfC family. In terms of assembly, homodimer.

The protein resides in the cytoplasm. It is found in the nucleoid. Binds to DNA and alters its conformation. May be involved in regulation of gene expression, nucleoid organization and DNA protection. The sequence is that of Nucleoid-associated protein alr5067 from Nostoc sp. (strain PCC 7120 / SAG 25.82 / UTEX 2576).